The following is a 305-amino-acid chain: Acetaldehyde dehydrogenase (305 aa).

The active-site Acyl-thioester intermediate is the C130. Residues 161–169 (SVGPGTRKN) and N272 each bind NAD(+).

The protein belongs to the acetaldehyde dehydrogenase family.

It carries out the reaction acetaldehyde + NAD(+) + CoA = acetyl-CoA + NADH + H(+). This is Acetaldehyde dehydrogenase from Leptothrix cholodnii (strain ATCC 51168 / LMG 8142 / SP-6) (Leptothrix discophora (strain SP-6)).